The primary structure comprises 439 residues: Niacin transporter NiaP (439 aa).

Helical transmembrane passes span 20–40 (LWVVGLGWMFDALDTGIIAFI), 57–77 (WIVSIGFIGMALGAVFSGGLA), 84–104 (TVFATTLLIYSLATAACAFAP), 108–128 (WLLAFRFIVGLGLGGQLPVAV), 143–163 (FIVLLESFWGLGWLVAALVSY), 169–189 (FGWHIAFLIGGLPAIYVYVII), 253–273 (LMLWLVWFGIVFSYYGIFTWL), 288–308 (FEYVLIMILAQLPGYISAAWL), 316–336 (ATLAGFIGACAISAYFFGQAD), 338–358 (VFNIMVWGCLLSFFNLGAWGV), 374–394 (FGAGWASAVGRMGGIAAPIVV), and 407–427 (VFMMFTLVLLAVAAVIVILGE).

This sequence belongs to the major facilitator superfamily. Sugar transporter (TC 2.A.1.1) family.

It is found in the cell inner membrane. Functions as a high-affinity transporter of niacin (nicotinamide or nicotinate). Probably substantially contributes to niacin transport when its concentration in the medium is very low. This is Niacin transporter NiaP from Acinetobacter baylyi (strain ATCC 33305 / BD413 / ADP1).